Reading from the N-terminus, the 149-residue chain is Ribonuclease pancreatic (149 aa).

A signal peptide spans 1–25 (MGLEKSLILFPLFVLLLGWVQPSLG). Positions 30-49 (AQKFERQHMDSSGSSNNSPT) are disordered. Residues Lys-32 and Arg-35 each coordinate substrate. Catalysis depends on His-37, which acts as the Proton acceptor. A compositionally biased stretch (polar residues) spans 39 to 49 (DSSGSSNNSPT). 4 disulfides stabilise this stretch: Cys-51-Cys-109, Cys-65-Cys-120, Cys-83-Cys-135, and Cys-90-Cys-97. Position 66–70 (66–70 (KPVNT)) interacts with substrate. Asn-87 is a glycosylation site (N-linked (GlcNAc...) asparagine). Lys-91 is a substrate binding site. Residue His-144 is the Proton donor of the active site.

Belongs to the pancreatic ribonuclease family. In terms of assembly, monomer. Interacts with and forms tight 1:1 complexes with RNH1. Dimerization of two such complexes may occur. Interaction with RNH1 inhibits this protein. Pancreas.

Its subcellular location is the secreted. The enzyme catalyses an [RNA] containing cytidine + H2O = an [RNA]-3'-cytidine-3'-phosphate + a 5'-hydroxy-ribonucleotide-3'-[RNA].. It catalyses the reaction an [RNA] containing uridine + H2O = an [RNA]-3'-uridine-3'-phosphate + a 5'-hydroxy-ribonucleotide-3'-[RNA].. Endonuclease that catalyzes the cleavage of RNA on the 3' side of pyrimidine nucleotides. Acts on single-stranded and double-stranded RNA. This is Ribonuclease pancreatic (Rnase1) from Mus pahari (Gairdner's shrew-mouse).